Reading from the N-terminus, the 210-residue chain is Na(+)-translocating NADH-quinone reductase subunit D (210 aa).

Helical transmembrane passes span 14–34 (PIVN…ALAV), 42–62 (LVMA…ISMI), 72–92 (IIVQ…LLQA), 103–123 (VFVG…AYAM), 131–151 (FMDG…VGFV), and 178–198 (NGLL…IWII).

This sequence belongs to the NqrDE/RnfAE family. As to quaternary structure, composed of six subunits; NqrA, NqrB, NqrC, NqrD, NqrE and NqrF.

The protein localises to the cell inner membrane. It catalyses the reaction a ubiquinone + n Na(+)(in) + NADH + H(+) = a ubiquinol + n Na(+)(out) + NAD(+). Its function is as follows. NQR complex catalyzes the reduction of ubiquinone-1 to ubiquinol by two successive reactions, coupled with the transport of Na(+) ions from the cytoplasm to the periplasm. NqrA to NqrE are probably involved in the second step, the conversion of ubisemiquinone to ubiquinol. This is Na(+)-translocating NADH-quinone reductase subunit D from Shewanella baltica (strain OS223).